Reading from the N-terminus, the 606-residue chain is Vacuolar calcium ion transporter (606 aa).

Residues 1–110 (MSPPRRVSFP…NSLDPNPGLM (110 aa)) are disordered. Over 1–137 (MSPPRRVSFP…PTYWGSMKAA (137 aa)) the chain is Cytoplasmic. Residues 18 to 30 (PPLADSPLSSPKL) are compositionally biased toward low complexity. Residues 36-56 (QSSSTPIVSSNLPTDTTNSAS) show a composition bias toward polar residues. Residues 138 to 158 (ITSTWLNVLLVFIPIGWALYL) form a helical membrane-spanning segment. Residues 159-170 (AKHNGGKDSISD) are Vacuolar-facing. The chain crosses the membrane as a helical span at residues 171–191 (TAVFCCTFIAIIPLAGLLGFA). The Cytoplasmic portion of the chain corresponds to 192–204 (TEEAALRLGQTLG). The helical transmembrane segment at 205–225 (GLLNATLGNAVELIVAILALI) threads the bilayer. The Vacuolar portion of the chain corresponds to 226 to 236 (KCELQVVQSSL). The chain crosses the membrane as a helical span at residues 237–257 (VGSILSNILLVLGMCFFAGGV). Topologically, residues 258–272 (RFAEQAIKSTAAQLN) are cytoplasmic. A helical transmembrane segment spans residues 273–293 (ASLLLIAVIAVLIPSAFHFSI). The Vacuolar portion of the chain corresponds to 294–313 (SSSTSNTDASELANGEGADL). The helical transmembrane segment at 314-334 (LSMSHAVSILLLILYLGYLLF) threads the bilayer. Over 335–437 (QMWTHATYYV…EEEEETPQMN (103 aa)) the chain is Cytoplasmic. The tract at residues 376–434 (DEEESYSTATTVSDAAVPPSARAEGGEVPATHGPGTAAAETGNRVEHEDAEEEEEEETP) is disordered. Over residues 423-433 (EDAEEEEEEET) the composition is skewed to acidic residues. A helical membrane pass occupies residues 438-458 (VVCTIALMVIDTVLVGVTAEF). Residues 459 to 477 (LVDSINGMVESNPSLSAEW) are Vacuolar-facing. The chain crosses the membrane as a helical span at residues 478-498 (VGLILLPIVGNAAEHFTAVSV). The Cytoplasmic segment spans residues 499–505 (SVKDKLD). A helical transmembrane segment spans residues 506-526 (LSISVAVGSSIQIALFVIPVI). The Vacuolar segment spans residues 527-535 (ELLAWTIGK). A helical transmembrane segment spans residues 536 to 556 (PMTLLFDPYESIVLFLSVLIV). Residues 557-566 (NQTLADGRSN) lie on the Cytoplasmic side of the membrane. The helical transmembrane segment at 567-587 (WMEGMVLMMLYIIIAVSFWYY) threads the bilayer. Residues 588 to 606 (PGSTTATLLGCQDSSSVTG) are Vacuolar-facing.

The protein belongs to the Ca(2+):cation antiporter (CaCA) (TC 2.A.19) family.

Its subcellular location is the vacuole membrane. In terms of biological role, has a role in promoting intracellular calcium ion sequestration via the exchange of calcium ions for hydrogen ions across the vacuolar membrane. In Cryptococcus neoformans var. grubii serotype A (strain H99 / ATCC 208821 / CBS 10515 / FGSC 9487) (Filobasidiella neoformans var. grubii), this protein is Vacuolar calcium ion transporter.